The sequence spans 291 residues: Porphobilinogen deaminase (291 aa).

An S-(dipyrrolylmethanemethyl)cysteine modification is found at cysteine 233.

It belongs to the HMBS family. As to quaternary structure, monomer. Requires dipyrromethane as cofactor.

The catalysed reaction is 4 porphobilinogen + H2O = hydroxymethylbilane + 4 NH4(+). Its pathway is porphyrin-containing compound metabolism; protoporphyrin-IX biosynthesis; coproporphyrinogen-III from 5-aminolevulinate: step 2/4. Functionally, tetrapolymerization of the monopyrrole PBG into the hydroxymethylbilane pre-uroporphyrinogen in several discrete steps. This is Porphobilinogen deaminase (hemC) from Ruminiclostridium josui (Clostridium josui).